The primary structure comprises 544 residues: NEDD4-binding protein 3 (544 aa).

Disordered stretches follow at residues 61 to 84 (LPKKDSKSTKNTKRAPRNEPADYA), 116 to 252 (SVFK…EFSC), 335 to 365 (KELRAQQGLAPEPRAPGTLPEADPSARPEEE), and 430 to 465 (QEQAPREEAPGSCETDDCKSRGLLGEAGGSEARDSA). Phosphoserine is present on serine 176. A compositionally biased stretch (low complexity) spans 186-222 (PSLSDSSSGGSFGRSPGTGPSPFSSSLGHLNHLGGSL). Residues 294 to 530 (LAELKRLYVE…LEQELRALRE (237 aa)) are a coiled coil.

It belongs to the N4BP3 family. Binds NEDD4. Interacts with 14-3-3 proteins. Interacts with MAVS.

Its subcellular location is the cytoplasmic vesicle. It is found in the cell projection. The protein localises to the axon. It localises to the dendrite. Its function is as follows. Plays a positive role in the antiviral innate immune signaling pathway. Mechanistically, interacts with MAVS and functions as a positive regulator to promote 'Lys-63'-linked polyubiquitination of MAVS and thus strengthens the interaction between MAVS and TRAF2. Also plays a role in axon and dendrite arborization during cranial nerve development. May also be important for neural crest migration and early development of other anterior structures including eye, brain and cranial cartilage. The sequence is that of NEDD4-binding protein 3 (N4BP3) from Homo sapiens (Human).